A 789-amino-acid chain; its full sequence is Protein translocase subunit SecA (789 aa).

ATP is bound by residues glutamine 85, 103-107 (GEGKT), and aspartate 492.

The protein belongs to the SecA family. Monomer and homodimer. Part of the essential Sec protein translocation apparatus which comprises SecA, SecYEG and auxiliary proteins SecDF. Other proteins may also be involved.

It is found in the cell membrane. The protein localises to the cytoplasm. It catalyses the reaction ATP + H2O + cellular proteinSide 1 = ADP + phosphate + cellular proteinSide 2.. Functionally, part of the Sec protein translocase complex. Interacts with the SecYEG preprotein conducting channel. Has a central role in coupling the hydrolysis of ATP to the transfer of proteins into and across the cell membrane, serving as an ATP-driven molecular motor driving the stepwise translocation of polypeptide chains across the membrane. The polypeptide is Protein translocase subunit SecA (Limosilactobacillus fermentum (strain NBRC 3956 / LMG 18251) (Lactobacillus fermentum)).